Consider the following 222-residue polypeptide: Thiamine-phosphate synthase (222 aa).

Residues 44–48 and N75 contribute to the 4-amino-2-methyl-5-(diphosphooxymethyl)pyrimidine site; that span reads QVRMK. Residues D76 and D95 each contribute to the Mg(2+) site. Residue T114 participates in 4-amino-2-methyl-5-(diphosphooxymethyl)pyrimidine binding. A 2-[(2R,5Z)-2-carboxy-4-methylthiazol-5(2H)-ylidene]ethyl phosphate-binding site is contributed by 140-142; that stretch reads SRS. K143 contributes to the 4-amino-2-methyl-5-(diphosphooxymethyl)pyrimidine binding site. 2-[(2R,5Z)-2-carboxy-4-methylthiazol-5(2H)-ylidene]ethyl phosphate is bound at residue G171.

It belongs to the thiamine-phosphate synthase family. It depends on Mg(2+) as a cofactor.

The enzyme catalyses 2-[(2R,5Z)-2-carboxy-4-methylthiazol-5(2H)-ylidene]ethyl phosphate + 4-amino-2-methyl-5-(diphosphooxymethyl)pyrimidine + 2 H(+) = thiamine phosphate + CO2 + diphosphate. It carries out the reaction 2-(2-carboxy-4-methylthiazol-5-yl)ethyl phosphate + 4-amino-2-methyl-5-(diphosphooxymethyl)pyrimidine + 2 H(+) = thiamine phosphate + CO2 + diphosphate. It catalyses the reaction 4-methyl-5-(2-phosphooxyethyl)-thiazole + 4-amino-2-methyl-5-(diphosphooxymethyl)pyrimidine + H(+) = thiamine phosphate + diphosphate. The protein operates within cofactor biosynthesis; thiamine diphosphate biosynthesis; thiamine phosphate from 4-amino-2-methyl-5-diphosphomethylpyrimidine and 4-methyl-5-(2-phosphoethyl)-thiazole: step 1/1. Functionally, condenses 4-methyl-5-(beta-hydroxyethyl)thiazole monophosphate (THZ-P) and 2-methyl-4-amino-5-hydroxymethyl pyrimidine pyrophosphate (HMP-PP) to form thiamine monophosphate (TMP). The sequence is that of Thiamine-phosphate synthase from Anaeromyxobacter dehalogenans (strain 2CP-C).